A 110-amino-acid polypeptide reads, in one-letter code: SOSS complex subunit C (110 aa).

It belongs to the SOSS-C family. Belongs to the multiprotein complex Integrator. Component of the SOSS complex, composed of soss-b (soss-b1/nabp2 or soss-b2/nabp1), soss-a/ints3 and soss-c/inip.

The protein localises to the nucleus. Its function is as follows. Component of the SOSS complex, a multiprotein complex that functions downstream of the MRN complex to promote DNA repair and G2/M checkpoint. The SOSS complex associates with single-stranded DNA at DNA lesions and influences diverse endpoints in the cellular DNA damage response including cell-cycle checkpoint activation, recombinational repair and maintenance of genomic stability. Required for efficient homologous recombination-dependent repair of double-strand breaks (DSBs). The chain is SOSS complex subunit C (inip) from Xenopus laevis (African clawed frog).